Here is an 876-residue protein sequence, read N- to C-terminus: ATP-dependent helicase Lhr-Core (876 aa).

The ATP site is built by Q37, K60, T61, D175, E176, R374, and H377. The 192-residue stretch at 41–232 (IPLIKKGKNV…FLVGGNGDYE (192 aa)) folds into the Helicase ATP-binding domain. Residues 175–178 (DEIH) carry the DEAH box motif. Residues 249–421 (PVKDLVHATE…NIHVPENPLD (173 aa)) enclose the Helicase C-terminal domain. Residues 422-506 (VLTQLIVAAS…IFFLNSGTIP (85 aa)) are WH domain. The interval 507–876 (DEAMIPVKME…DLEYTEAGIK (370 aa)) is domain 4.

This sequence belongs to the Lhr helicase family. Lhr-Core subfamily. Monomer.

The enzyme catalyses Couples ATP hydrolysis with the unwinding of duplex DNA by translocating in the 3'-5' direction.. It catalyses the reaction ATP + H2O = ADP + phosphate + H(+). In terms of biological role, probably part of a 4-gene DNA damage response locus in which the upstream ups system, in combination with this downstream locus, functions in homologous recombination to rescue Sulfolobales from DNA-damaging threats. DNA helicase that translocates in a 3'-5' direction on single-stranded (ss)DNA. Binds Holliday junction (HJ) DNA, Y-shaped DNA, DNA with a 3'-overhang and single-stranded (ss)DNA with high affinity; binds double-stranded (ds)DNA with less affinity. Has helicase activity on DNA with a 3'-overhang, Y-shaped DNA and HJ DNA. Does not unwind blunt-ended dsDNA or DNA with a 5'-overhang. This chain is ATP-dependent helicase Lhr-Core, found in Sulfolobus acidocaldarius (strain ATCC 33909 / DSM 639 / JCM 8929 / NBRC 15157 / NCIMB 11770).